We begin with the raw amino-acid sequence, 66 residues long: Large ribosomal subunit protein bL35 (66 aa).

This sequence belongs to the bacterial ribosomal protein bL35 family.

This Cereibacter sphaeroides (strain ATCC 17029 / ATH 2.4.9) (Rhodobacter sphaeroides) protein is Large ribosomal subunit protein bL35.